A 217-amino-acid polypeptide reads, in one-letter code: Thiopurine S-methyltransferase (217 aa).

S-adenosyl-L-methionine contacts are provided by Trp11, Leu46, Glu67, and Arg122.

The protein belongs to the class I-like SAM-binding methyltransferase superfamily. TPMT family.

It localises to the cytoplasm. The enzyme catalyses S-adenosyl-L-methionine + a thiopurine = S-adenosyl-L-homocysteine + a thiopurine S-methylether.. The polypeptide is Thiopurine S-methyltransferase (Vibrio vulnificus (strain YJ016)).